Consider the following 393-residue polypeptide: UDP-N-acetylglucosamine--N-acetylmuramyl-(pentapeptide) pyrophosphoryl-undecaprenol N-acetylglucosamine transferase (393 aa).

Residues 15-17, Asn-129, Arg-171, Ser-211, and Gln-322 each bind UDP-N-acetyl-alpha-D-glucosamine; that span reads TAG.

This sequence belongs to the glycosyltransferase 28 family. MurG subfamily.

It localises to the cell membrane. It carries out the reaction di-trans,octa-cis-undecaprenyl diphospho-N-acetyl-alpha-D-muramoyl-L-alanyl-D-glutamyl-meso-2,6-diaminopimeloyl-D-alanyl-D-alanine + UDP-N-acetyl-alpha-D-glucosamine = di-trans,octa-cis-undecaprenyl diphospho-[N-acetyl-alpha-D-glucosaminyl-(1-&gt;4)]-N-acetyl-alpha-D-muramoyl-L-alanyl-D-glutamyl-meso-2,6-diaminopimeloyl-D-alanyl-D-alanine + UDP + H(+). The protein operates within cell wall biogenesis; peptidoglycan biosynthesis. Its function is as follows. Cell wall formation. Catalyzes the transfer of a GlcNAc subunit on undecaprenyl-pyrophosphoryl-MurNAc-pentapeptide (lipid intermediate I) to form undecaprenyl-pyrophosphoryl-MurNAc-(pentapeptide)GlcNAc (lipid intermediate II). This chain is UDP-N-acetylglucosamine--N-acetylmuramyl-(pentapeptide) pyrophosphoryl-undecaprenol N-acetylglucosamine transferase, found in Bifidobacterium longum (strain DJO10A).